Here is an 836-residue protein sequence, read N- to C-terminus: Phenylalanine--tRNA ligase beta subunit (836 aa).

The 117-residue stretch at 44–160 (PETTGPLVIG…EIAEPGTDAR (117 aa)) folds into the tRNA-binding domain. Positions 420–495 (PSMPQIRMKT…RLEGLEDIPT (76 aa)) constitute a B5 domain. The Mg(2+) site is built by D473, D479, E482, and E483. Residues 742 to 835 (SAFPVLHQDL…AAELFGATMR (94 aa)) form the FDX-ACB domain.

This sequence belongs to the phenylalanyl-tRNA synthetase beta subunit family. Type 1 subfamily. As to quaternary structure, tetramer of two alpha and two beta subunits. Mg(2+) serves as cofactor.

It is found in the cytoplasm. It catalyses the reaction tRNA(Phe) + L-phenylalanine + ATP = L-phenylalanyl-tRNA(Phe) + AMP + diphosphate + H(+). This is Phenylalanine--tRNA ligase beta subunit from Corynebacterium diphtheriae (strain ATCC 700971 / NCTC 13129 / Biotype gravis).